Consider the following 122-residue polypeptide: MKIILFLTLIVFTSCELYHYQECVRGTTVLLKEPCPSGTYEGNSPFHPLADNKFALTCTSTHFAFACADGTRHTYQLRARSVSPKLFIRQEEVQQELYSPLFLIVAALVFLILCFTIKRKTE.

The N-terminal stretch at 1-15 (MKIILFLTLIVFTSC) is a signal peptide. The 66-residue stretch at 16-81 (ELYHYQECVR…RHTYQLRARS (66 aa)) folds into the X4e domain. Topologically, residues 16 to 96 (ELYHYQECVR…FIRQEEVQQE (81 aa)) are virion surface. Intrachain disulfides connect Cys-23-Cys-58 and Cys-35-Cys-67. The helical transmembrane segment at 97–117 (LYSPLFLIVAALVFLILCFTI) threads the bilayer. Over 118 to 122 (KRKTE) the chain is Intravirion. The Di-lysine motif motif lies at 118–122 (KRKTE).

As to quaternary structure, interacts with the spike glycoprotein. Interacts with M protein. Interacts with E protein. Interacts with the ORF3a protein. Interacts with human SGT. Interacts with host ITGAL. Interacts with host BST2.

It localises to the virion. The protein localises to the host endoplasmic reticulum membrane. It is found in the host endoplasmic reticulum-Golgi intermediate compartment membrane. Its subcellular location is the host Golgi apparatus membrane. Its function is as follows. Plays a role as antagonist of host tetherin (BST2), disrupting its antiviral effect. Acts by binding to BST2 thereby interfering with its glycosylation. May suppress small interfering RNA (siRNA). May bind to host ITGAL, thereby playing a role in attachment or modulation of leukocytes. This chain is ORF7a protein, found in Severe acute respiratory syndrome coronavirus (SARS-CoV).